A 210-amino-acid polypeptide reads, in one-letter code: Uridine kinase (210 aa).

ATP is bound at residue 12 to 19 (GGSGSGKT).

The protein belongs to the uridine kinase family.

It localises to the cytoplasm. The enzyme catalyses uridine + ATP = UMP + ADP + H(+). It carries out the reaction cytidine + ATP = CMP + ADP + H(+). It participates in pyrimidine metabolism; CTP biosynthesis via salvage pathway; CTP from cytidine: step 1/3. The protein operates within pyrimidine metabolism; UMP biosynthesis via salvage pathway; UMP from uridine: step 1/1. The chain is Uridine kinase from Bacillus pumilus (strain SAFR-032).